Consider the following 174-residue polypeptide: Isomerase prhC (174 aa).

This sequence belongs to the trt14 isomerase family. In terms of assembly, homodimer.

The protein operates within secondary metabolite biosynthesis; terpenoid biosynthesis. Isomerase; part of the gene cluster that mediates the biosynthesis of paraherquonin, a meroterpenoid with a unique, highly congested hexacyclic molecular architecture. The first step of the pathway is the synthesis of 3,5-dimethylorsellinic acid (DMOA) by the polyketide synthase prhL. Synthesis of DMOA is followed by farnesylation by the prenyltransferase prhE, methylesterification by the methyl-transferase prhM, epoxidation of the prenyl chain by the flavin-dependent monooxygenase prhF, and cyclization of the farnesyl moiety by the terpene cyclase prhH, to yield the tetracyclic intermediate, protoaustinoid A. The short chain dehydrogenase prhI then oxidizes the C-3 alcohol group of the terpene cyclase product to transform protoaustinoid A into protoaustinoid B. The FAD-binding monooxygenase prhJ catalyzes the oxidation of protoaustinoid B into preaustinoid A which is further oxidized into preaustinoid A1 by FAD-binding monooxygenase phrK. Finally, prhA leads to berkeleydione via the berkeleyone B intermediate. PrhA is a multifunctional dioxygenase that first desaturates at C5-C6 to form berkeleyone B, followed by rearrangement of the A/B-ring to form the cycloheptadiene moiety in berkeleydione. Berkeleydione serves as the key intermediate for the biosynthesis of paraherquonin as well as many other meroterpenoids. The cytochrome P450 monooxygenases prhB, prhD, and prhN, as well as the isomerase prhC, are probably involved in the late stage of paraherquonin biosynthesis, after the production of berkeleydione. Especially prhC might be a multifunctional enzyme that catalyzes the D-ring expansion via intramolecular methoxy rearrangement, as well as the hydrolysis of the expanded D-ring. This chain is Isomerase prhC, found in Penicillium brasilianum.